The primary structure comprises 865 residues: TATA box-binding protein-associated factor RNA polymerase I subunit B (865 aa).

The segment at 1-33 (MHSAKNEKCNACGGYRFSVNDGFKYCDRCGALF) adopts an RRN7-type zinc-finger fold. The Zn(2+) site is built by Cys-9, Cys-12, Cys-26, and Cys-29. The segment at 35 to 99 (NFEELEEEEG…DFLQQQAIKG (65 aa)) is B-reader. The B-linker stretch occupies residues 100 to 111 (EELELPHDATPD). An N-terminal cyclin fold region spans residues 112 to 348 (YLYRLALRLF…SQPERMKQGE (237 aa)). Residues 233–261 (DEDGDQDAQGGQQLDDLTLETTQNPDESI) form a disordered region. Low complexity predominate over residues 239–248 (DAQGGQQLDD). The span at 252-261 (ETTQNPDESI) shows a compositional bias: polar residues. Residues 349 to 496 (VVKPTIVDYA…LLTLRLTFQL (148 aa)) form a C-terminal cyclin fold region.

This sequence belongs to the RRN7/TAF1B family.

Its subcellular location is the nucleus. The protein localises to the nucleolus. Functionally, component of RNA polymerase I core factor complex that acts as a GTF2B/TFIIB-like factor and plays a key role in multiple steps during transcription initiation such as pre-initiation complex (PIC) assembly and postpolymerase recruitment events in polymerase I (Pol I) transcription. Binds rDNA promoters and plays a role in Pol I recruitment. This Caenorhabditis elegans protein is TATA box-binding protein-associated factor RNA polymerase I subunit B.